The chain runs to 168 residues: Peptidoglycan-associated lipoprotein (168 aa).

The signal sequence occupies residues 1-24; it reads MGRIAALTRNPVMIALVAMLAIAG. Cys-25 is lipidated: N-palmitoyl cysteine. Residue Cys-25 is the site of S-diacylglycerol cysteine attachment. The OmpA-like domain maps to 50 to 167; sequence AQDFTVNIGD…RAVTTLSGAG (118 aa).

Belongs to the Pal lipoprotein family. As to quaternary structure, the Tol-Pal system is composed of five core proteins: the inner membrane proteins TolA, TolQ and TolR, the periplasmic protein TolB and the outer membrane protein Pal. They form a network linking the inner and outer membranes and the peptidoglycan layer.

Its subcellular location is the cell outer membrane. In terms of biological role, part of the Tol-Pal system, which plays a role in outer membrane invagination during cell division and is important for maintaining outer membrane integrity. This is Peptidoglycan-associated lipoprotein from Mesorhizobium japonicum (strain LMG 29417 / CECT 9101 / MAFF 303099) (Mesorhizobium loti (strain MAFF 303099)).